Consider the following 187-residue polypeptide: MKYLITGLGNIGSEYWGTRHNIGFRVVNHLVESVGGNFTEERYGAIARIRVKNCDLIVLKPNTFMNLSGNAVRYWLQKENIPVENLLIVVDDLALPFGTLRLKPKGSDAGHNGLKNIAQLLNTQEYSRLRFGIGSDFPRGGQIDYVLGKFPPEELQLMPEILDRATEIIKSFCLAGIQITMNQFNNK.

Y15 serves as a coordination point for tRNA. The Proton acceptor role is filled by H20. TRNA is bound by residues F64, N66, and N112.

The protein belongs to the PTH family. Monomer.

The protein resides in the cytoplasm. It catalyses the reaction an N-acyl-L-alpha-aminoacyl-tRNA + H2O = an N-acyl-L-amino acid + a tRNA + H(+). Its function is as follows. Hydrolyzes ribosome-free peptidyl-tRNAs (with 1 or more amino acids incorporated), which drop off the ribosome during protein synthesis, or as a result of ribosome stalling. Catalyzes the release of premature peptidyl moieties from peptidyl-tRNA molecules trapped in stalled 50S ribosomal subunits, and thus maintains levels of free tRNAs and 50S ribosomes. The sequence is that of Peptidyl-tRNA hydrolase from Parabacteroides distasonis (strain ATCC 8503 / DSM 20701 / CIP 104284 / JCM 5825 / NCTC 11152).